A 512-amino-acid chain; its full sequence is Envelope glycoprotein (512 aa).

Positions 1–15 are cleaved as a signal peptide; sequence MFLQTALLLLSLGVA. 5 N-linked (GlcNAc...) asparagine; by host glycosylation sites follow: N185, N263, N289, N378, and N416. A helical transmembrane segment spans residues 479–502; that stretch reads GQLGGLLYGNIGVYLLIAFAFVLL.

It localises to the virion membrane. In terms of biological role, attaches the virus to host cellular receptor and later induces fusion of virion with host membrane. In Thogoto virus (isolate SiAr 126) (Tho), this protein is Envelope glycoprotein.